The sequence spans 347 residues: Protein-glutamate methylesterase/protein-glutamine glutaminase 1 (347 aa).

Residues 6–123 (RVLVVDDSAT…LRPFGDLAEK (118 aa)) enclose the Response regulatory domain. D57 bears the 4-aspartylphosphate mark. Residues 150–342 (FRVGRKIVAI…EEILKMTAAR (193 aa)) form the CheB-type methylesterase domain. Catalysis depends on residues S162, H188, and D284.

Belongs to the CheB family. Phosphorylated by CheA. Phosphorylation of the N-terminal regulatory domain activates the methylesterase activity.

The protein resides in the cytoplasm. It catalyses the reaction [protein]-L-glutamate 5-O-methyl ester + H2O = L-glutamyl-[protein] + methanol + H(+). It carries out the reaction L-glutaminyl-[protein] + H2O = L-glutamyl-[protein] + NH4(+). Its function is as follows. Involved in chemotaxis. Part of a chemotaxis signal transduction system that modulates chemotaxis in response to various stimuli. Catalyzes the demethylation of specific methylglutamate residues introduced into the chemoreceptors (methyl-accepting chemotaxis proteins or MCP) by CheR. Also mediates the irreversible deamidation of specific glutamine residues to glutamic acid. This Rhizobium johnstonii (strain DSM 114642 / LMG 32736 / 3841) (Rhizobium leguminosarum bv. viciae) protein is Protein-glutamate methylesterase/protein-glutamine glutaminase 1.